The chain runs to 372 residues: MRVGPVRFALSGASQPRGPGLLFPAARGTPAKRLLDTDDAGAVAAKCPRLSECSSPPDYLSPPGSPCSPQPPPSTQGTGGSCVSSPGPSRIADYLLLPLAEREHVSRALCIHTGRELRCKEFPIKHYQDKIRPYIQLPSHSNITGIVEVLLGESKAYVFFEKDFGDMHSYVRSRKRLREEEAARLFKQIVSAVAHCHQSAIVLGDLKLRKFVFSTEERTQLRLESLEDTHIIKGEDDALSDKHGCPAYVSPEILNTTGTYSGKAADVWSLGVMLYTLLVGRYPFHDSDPSALFSKIRRGQFCIPEHVSPKARCLIRSLLRREPSERLTAPQILLHPWFEYVLEPGYVDSEIGTSDQIVPEYQEDSDISSFFC.

Disordered stretches follow at residues 1-26 and 49-85; these read MRVG…FPAA and RLSE…CVSS. Residues 59–74 show a composition bias toward pro residues; it reads YLSPPGSPCSPQPPPS. One can recognise a Protein kinase domain in the interval 91–338; the sequence is IADYLLLPLA…APQILLHPWF (248 aa). The COP1-binding signature appears at 355–360; the sequence is DQIVPE.

This sequence belongs to the protein kinase superfamily. CAMK Ser/Thr protein kinase family. Tribbles subfamily. In terms of assembly, monomer. Interacts (via protein kinase domain) with CEBPA. Interacts with COP1.

Functionally, adapter protein involved in protein degradation by interacting with COP1 ubiquitin ligase. Promotes CEBPA degradation and inhibits its function. Controls macrophage, eosinophil and neutrophil differentiation via the COP1-binding domain. Regulates myeloid cell differentiation by altering the expression of CEBPA in a COP1-dependent manner. Interacts with MAPK kinases and regulates activation of MAP kinases, but has no kinase activity. The sequence is that of Tribbles homolog 1 from Mus musculus (Mouse).